Reading from the N-terminus, the 76-residue chain is Sec-independent protein translocase protein TatA (76 aa).

Residues 1–21 form a helical membrane-spanning segment; it reads MGGLSIWHWLIVLLIVALVFG. The tract at residues 43–76 is disordered; that stretch reads MKEGEAPADAQQLPRSGSVDVNAKETTRSDSNKA. Residues 64-76 are compositionally biased toward basic and acidic residues; sequence NAKETTRSDSNKA.

The protein belongs to the TatA/E family. As to quaternary structure, the Tat system comprises two distinct complexes: a TatABC complex, containing multiple copies of TatA, TatB and TatC subunits, and a separate TatA complex, containing only TatA subunits. Substrates initially bind to the TatABC complex, which probably triggers association of the separate TatA complex to form the active translocon.

It is found in the cell inner membrane. In terms of biological role, part of the twin-arginine translocation (Tat) system that transports large folded proteins containing a characteristic twin-arginine motif in their signal peptide across membranes. TatA could form the protein-conducting channel of the Tat system. The chain is Sec-independent protein translocase protein TatA from Burkholderia lata (strain ATCC 17760 / DSM 23089 / LMG 22485 / NCIMB 9086 / R18194 / 383).